The primary structure comprises 333 residues: Phosphate acyltransferase (333 aa).

This sequence belongs to the PlsX family. In terms of assembly, homodimer. Probably interacts with PlsY.

It is found in the cytoplasm. It carries out the reaction a fatty acyl-[ACP] + phosphate = an acyl phosphate + holo-[ACP]. Its pathway is lipid metabolism; phospholipid metabolism. Functionally, catalyzes the reversible formation of acyl-phosphate (acyl-PO(4)) from acyl-[acyl-carrier-protein] (acyl-ACP). This enzyme utilizes acyl-ACP as fatty acyl donor, but not acyl-CoA. The sequence is that of Phosphate acyltransferase from Aliarcobacter butzleri (strain RM4018) (Arcobacter butzleri).